Reading from the N-terminus, the 349-residue chain is MAAITNNPDKEKALGLVLNQIERNFGKGSIMRLGDAARMRVETISSGSLTLDLALGGGLPQGRIIEIYGPESSGKTTLALHAIAEVQKAGGVAAFVDAEHALDPNYSNALGVDIDNLLVAQPDTGESALEIVDQLVRSAAVDIVVIDSVAALVPRAEIEGEMGDTQVGLQARLMSKALRKIAGNIGKSGCVVIFLNQLRQKIGVTYGSPEVTTGGNALKFYASVRLDIRRIQTLKKGSEGEYGIRAKVKVAKNKVAPPFRIAEFDIIFGKGISRMGCMLDLAEQTDVVNRKGAWYSYNGENISQGRDNAVKYLEDNPEVADTIERQVREKLELGSLNFAISQTDDNEEE.

69–76 contributes to the ATP binding site; it reads GPESSGKT.

Belongs to the RecA family.

Its subcellular location is the cytoplasm. Functionally, can catalyze the hydrolysis of ATP in the presence of single-stranded DNA, the ATP-dependent uptake of single-stranded DNA by duplex DNA, and the ATP-dependent hybridization of homologous single-stranded DNAs. It interacts with LexA causing its activation and leading to its autocatalytic cleavage. This chain is Protein RecA, found in Rippkaea orientalis (strain PCC 8801 / RF-1) (Cyanothece sp. (strain PCC 8801)).